The primary structure comprises 124 residues: Large ribosomal subunit protein uL14 (124 aa).

This sequence belongs to the universal ribosomal protein uL14 family. As to quaternary structure, part of the 50S ribosomal subunit. Forms a cluster with proteins L3 and L19. In the 70S ribosome, L14 and L19 interact and together make contacts with the 16S rRNA in bridges B5 and B8.

Its function is as follows. Binds to 23S rRNA. Forms part of two intersubunit bridges in the 70S ribosome. This Mycoplasmoides gallisepticum (strain R(low / passage 15 / clone 2)) (Mycoplasma gallisepticum) protein is Large ribosomal subunit protein uL14.